The following is a 367-amino-acid chain: Type II methyltransferase M.CviJI (367 aa).

The 365-residue stretch at 3 to 367 (FRTLELFAGI…EYLGYLVQYD (365 aa)) folds into the SAM-dependent MTase C5-type domain. Cysteine 73 is a catalytic residue.

This sequence belongs to the class I-like SAM-binding methyltransferase superfamily. C5-methyltransferase family.

It catalyses the reaction a 2'-deoxycytidine in DNA + S-adenosyl-L-methionine = a 5-methyl-2'-deoxycytidine in DNA + S-adenosyl-L-homocysteine + H(+). In terms of biological role, a methylase that recognizes the double-stranded sequence 5'-RGCY-3', methylates C-3 on both strands, and protects the DNA from cleavage by the CviJI endonuclease. The chain is Type II methyltransferase M.CviJI from Chlorella (PBCV-IL3A).